Consider the following 74-residue polypeptide: YTDCKLAASGLGEEAESSEQSPSPTQLFPWMRPQAAAGRRRGRQTYSRYQTLELEKEFLFNPYLTRKRRIEVSR.

Residues 1–24 are compositionally biased toward low complexity; it reads YTDCKLAASGLGEEAESSEQSPSP. The disordered stretch occupies residues 1 to 28; the sequence is YTDCKLAASGLGEEAESSEQSPSPTQLF. The Antp-type hexapeptide signature appears at 27-32; sequence LFPWMR. Positions 39–74 form a DNA-binding region, homeobox; sequence RRRGRQTYSRYQTLELEKEFLFNPYLTRKRRIEVSR.

It belongs to the Antp homeobox family.

The protein resides in the nucleus. Its function is as follows. Sequence-specific transcription factor which is part of a developmental regulatory system that provides cells with specific positional identities on the anterior-posterior axis. The protein is Homeobox protein Hox-B8 (HOXB8) of Gallus gallus (Chicken).